Consider the following 84-residue polypeptide: Transmembrane protein EP84R (84 aa).

2 consecutive transmembrane segments (helical) span residues Val-31–Leu-51 and Ala-60–Tyr-80.

It belongs to the asfivirus EP84R family.

The protein localises to the virion membrane. This chain is Transmembrane protein EP84R, found in Ornithodoros (relapsing fever ticks).